The chain runs to 307 residues: Cyclooctat-9-en-7-ol synthase (307 aa).

Mg(2+) contacts are provided by Asp110, Asn220, Ser224, and Glu228. The DDXXD motif; degenerate signature appears at 110–113 (DDMD). Positions 220–228 (NDFYSYDRE) match the NSE/DTE motif motif.

It belongs to the terpene synthase family. As to quaternary structure, homodimer. The cofactor is Mg(2+).

It catalyses the reaction geranylgeranyl diphosphate + H2O = cyclooctat-9-en-7-ol + diphosphate. In terms of biological role, catalyzes the cyclization of the linear isoprenoid intermediate geranylgeranyl diphosphate to tricycclic cyclooctat-9-en-7-ol in the cyclooctatin biosynthesis pathway. Cyclooctatin is a potent inhibitor of lysophospholipase. The chain is Cyclooctat-9-en-7-ol synthase from Streptomyces melanosporofaciens.